The chain runs to 152 residues: UPF0266 membrane protein YobD (152 aa).

The next 3 membrane-spanning stretches (helical) occupy residues 6–26 (LVLI…QFIM), 45–65 (IDSV…VTNH), and 67–87 (ALIT…IFWI).

Belongs to the UPF0266 family.

Its subcellular location is the cell inner membrane. This is UPF0266 membrane protein YobD from Escherichia coli O157:H7 (strain EC4115 / EHEC).